A 122-amino-acid polypeptide reads, in one-letter code: Large ribosomal subunit protein uL14 (122 aa).

The protein belongs to the universal ribosomal protein uL14 family. Part of the 50S ribosomal subunit. Forms a cluster with proteins L3 and L19. In the 70S ribosome, L14 and L19 interact and together make contacts with the 16S rRNA in bridges B5 and B8.

Binds to 23S rRNA. Forms part of two intersubunit bridges in the 70S ribosome. The protein is Large ribosomal subunit protein uL14 of Lactobacillus helveticus (strain DPC 4571).